We begin with the raw amino-acid sequence, 319 residues long: Acetyl-coenzyme A carboxylase carboxyl transferase subunit alpha (319 aa).

One can recognise a CoA carboxyltransferase C-terminal domain in the interval 43–296 (LKQKSVELTQ…KTQLLLDLVE (254 aa)).

Belongs to the AccA family. As to quaternary structure, acetyl-CoA carboxylase is a heterohexamer composed of biotin carboxyl carrier protein (AccB), biotin carboxylase (AccC) and two subunits each of ACCase subunit alpha (AccA) and ACCase subunit beta (AccD).

It localises to the cytoplasm. It carries out the reaction N(6)-carboxybiotinyl-L-lysyl-[protein] + acetyl-CoA = N(6)-biotinyl-L-lysyl-[protein] + malonyl-CoA. The protein operates within lipid metabolism; malonyl-CoA biosynthesis; malonyl-CoA from acetyl-CoA: step 1/1. Its function is as follows. Component of the acetyl coenzyme A carboxylase (ACC) complex. First, biotin carboxylase catalyzes the carboxylation of biotin on its carrier protein (BCCP) and then the CO(2) group is transferred by the carboxyltransferase to acetyl-CoA to form malonyl-CoA. The protein is Acetyl-coenzyme A carboxylase carboxyl transferase subunit alpha of Blochmanniella floridana.